The chain runs to 275 residues: MSAHREETVRRLAAPDIAARKGGVPIVCLTAYTAPVAAALDDACDVLLVGDSVGMVVHGLPNTVGVTMEMMILHGQAVMRGSKKAMVVVDMPFGSYEASHEEAYANAVRIMKETGAQAVKVESGPTVPETIAYLTRRGVPVMGHVGLRPQAVLLEGGFKAKGKDDAGRAKVLEEARLTAEAGAFAIVVEGVAESLAREVTESVSVPTIGIGASAGCDGQVLVVDDMLGLFDWTPKFVRRYADLKGEIERAAAQYASDVRDRSFPGPAETYYAKKP.

Mg(2+) is bound by residues D51 and D90. Residues 51–52 (DS), D90, and K120 contribute to the 3-methyl-2-oxobutanoate site. E122 lines the Mg(2+) pocket. E189 (proton acceptor) is an active-site residue.

Belongs to the PanB family. Homodecamer; pentamer of dimers. Mg(2+) serves as cofactor.

The protein resides in the cytoplasm. The catalysed reaction is 3-methyl-2-oxobutanoate + (6R)-5,10-methylene-5,6,7,8-tetrahydrofolate + H2O = 2-dehydropantoate + (6S)-5,6,7,8-tetrahydrofolate. It functions in the pathway cofactor biosynthesis; (R)-pantothenate biosynthesis; (R)-pantoate from 3-methyl-2-oxobutanoate: step 1/2. In terms of biological role, catalyzes the reversible reaction in which hydroxymethyl group from 5,10-methylenetetrahydrofolate is transferred onto alpha-ketoisovalerate to form ketopantoate. The sequence is that of 3-methyl-2-oxobutanoate hydroxymethyltransferase from Caulobacter vibrioides (strain ATCC 19089 / CIP 103742 / CB 15) (Caulobacter crescentus).